The chain runs to 871 residues: Alanine--tRNA ligase (871 aa).

Histidine 561, histidine 565, cysteine 665, and histidine 669 together coordinate Zn(2+).

Belongs to the class-II aminoacyl-tRNA synthetase family. The cofactor is Zn(2+).

Its subcellular location is the cytoplasm. The enzyme catalyses tRNA(Ala) + L-alanine + ATP = L-alanyl-tRNA(Ala) + AMP + diphosphate. In terms of biological role, catalyzes the attachment of alanine to tRNA(Ala) in a two-step reaction: alanine is first activated by ATP to form Ala-AMP and then transferred to the acceptor end of tRNA(Ala). Also edits incorrectly charged Ser-tRNA(Ala) and Gly-tRNA(Ala) via its editing domain. This Dehalococcoides mccartyi (strain ATCC BAA-2100 / JCM 16839 / KCTC 5957 / BAV1) protein is Alanine--tRNA ligase.